A 255-amino-acid chain; its full sequence is 5'-nucleotidase SurE (255 aa).

A divalent metal cation is bound by residues Asp-8, Asp-9, Ser-40, and Asn-93.

The protein belongs to the SurE nucleotidase family. It depends on a divalent metal cation as a cofactor.

It localises to the cytoplasm. The catalysed reaction is a ribonucleoside 5'-phosphate + H2O = a ribonucleoside + phosphate. In terms of biological role, nucleotidase that shows phosphatase activity on nucleoside 5'-monophosphates. This is 5'-nucleotidase SurE from Rhodopseudomonas palustris (strain ATCC BAA-98 / CGA009).